The following is a 338-amino-acid chain: Probable cytosolic iron-sulfur protein assembly protein Ciao1 (338 aa).

WD repeat units follow at residues 12–51 (GHRG…RWVP), 58–97 (GHTR…FECN), 102–141 (GHEN…EYEC), 147–186 (THSQ…SDWS), 193–232 (SHDS…NEFG), 234–252 (ACPD…LSGF), 253–291 (HSRA…PANE), and 302–338 (AHSQ…EDDE).

This sequence belongs to the WD repeat CIA1 family.

In terms of biological role, essential component of the cytosolic iron-sulfur (Fe/S) protein assembly machinery. Required for the maturation of extramitochondrial Fe/S proteins. The chain is Probable cytosolic iron-sulfur protein assembly protein Ciao1 from Culex quinquefasciatus (Southern house mosquito).